We begin with the raw amino-acid sequence, 139 residues long: Large ribosomal subunit protein bL9m (139 aa).

A disordered region spans residues 83-121 (DHQQLSKRHETEVQKNMELRKESVFGHKKEEKPKEEKKG).

It belongs to the bacterial ribosomal protein bL9 family. In terms of assembly, component of the mitochondrial large ribosomal subunit (mt-LSU). Mature yeast 74S mitochondrial ribosomes consist of a small (37S) and a large (54S) subunit. The 37S small subunit contains a 15S ribosomal RNA (15S mt-rRNA) and 34 different proteins. The 54S large subunit contains a 21S rRNA (21S mt-rRNA) and 46 different proteins.

It localises to the mitochondrion. Component of the mitochondrial ribosome (mitoribosome), a dedicated translation machinery responsible for the synthesis of mitochondrial genome-encoded proteins, including at least some of the essential transmembrane subunits of the mitochondrial respiratory chain. The mitoribosomes are attached to the mitochondrial inner membrane and translation products are cotranslationally integrated into the membrane. This is Large ribosomal subunit protein bL9m (MRPL50) from Saccharomyces cerevisiae (strain ATCC 204508 / S288c) (Baker's yeast).